A 732-amino-acid polypeptide reads, in one-letter code: MHKFLALGLLPYLLGLLNSTRLTFIGNDESDTAIALTQIVRGLQQSSLAILALPSLALSDGVCQKERNVYLDDFLQRLHRSNYKSVVFSQTELFFQHIEENLQGANECISLILDEPNQLLNSLHDRHLGHRLSLFIFYWGARWPPSSRVIRFREPLRVVVVTRPRKKAFRIYYNQARPCSDSQLQLVNWYDGDNLGLQRIPLLPTALSVYANFKGRTFRVPVFHSPPWFWVTYCNNSFEEDEEFNSLDSIEKRKVRVTGGRDHRLLMLLSKHMNFRFKYIEAPGRTQGSMRSEDGKDSNDSFTGGIGLLQSGQADFFLGDVGLSWERRKAIEFSFFTLADSGAFATHAPRRLNEALAIMRPFKQDIWPHLILTIIFSGPIFYGIIALPYIWRRRWANSDVEHLGELYIHMTYLKEITPRLLKLKPRTVLSAHQMPHQLFQKCIWFTLRLFLKQSCNELHNGYRAKFLTIVYWIAATYVLADVYSAQLTSQFARPAREPPINTLQRLQAAMIHDGYRLYVEKESSSLEMLENGTELFRQLYALMRQQVINDPQGFFIDSVEAGIKLIAEGGEDKAVLGGRETLFFNVQQYGSNNFQLSQKLYTRYSAVAVQIGCPFLGSLNNVLMQLFESGILDKMTAAEYAKQYQEVEATRIYKGSVQAKNSEAYSRTESYDSTVISPLNLRMLQGAFIALGVGSLAAGVILLLEIVFIKLDQARLWMLCSRLQWIRYDRKV.

Positions 1 to 19 (MHKFLALGLLPYLLGLLNS) are cleaved as a signal peptide. Residues Asn-18, Asn-235, and Asn-299 are each glycosylated (N-linked (GlcNAc...) asparagine). The Extracellular segment spans residues 20–369 (TRLTFIGNDE…RPFKQDIWPH (350 aa)). A helical membrane pass occupies residues 370 to 390 (LILTIIFSGPIFYGIIALPYI). Residues 391-465 (WRRRWANSDV…NELHNGYRAK (75 aa)) are Cytoplasmic-facing. The chain crosses the membrane as a helical span at residues 466–486 (FLTIVYWIAATYVLADVYSAQ). The Extracellular segment spans residues 487-688 (LTSQFARPAR…LNLRMLQGAF (202 aa)). Asn-531 is a glycosylation site (N-linked (GlcNAc...) asparagine). The helical transmembrane segment at 689-709 (IALGVGSLAAGVILLLEIVFI) threads the bilayer. Topologically, residues 710 to 732 (KLDQARLWMLCSRLQWIRYDRKV) are cytoplasmic.

The protein belongs to the glutamate-gated ion channel (TC 1.A.10.1) family. As to expression, in the antenna, detected in sacculus neurons which innervate the first and second chambers (at protein level).

The protein resides in the cell membrane. Its function is as follows. Integral part of a neural sensory system in the antenna that provides the neural basis for the response to environmental changes in humidity (hygrosensation). Together with Ir25a and Ir93a, mediates the response of the hygrosensory sacculus neurons to changes in relative humidity and is required for dry detection behavior. This chain is Ionotropic receptor 40a, found in Drosophila melanogaster (Fruit fly).